A 406-amino-acid chain; its full sequence is Endo-xylogalacturonan hydrolase A (406 aa).

The N-terminal stretch at 1–18 (MALYRNLYLLASLGLSSA) is a signal peptide. 5 PbH1 repeats span residues 183–213 (ATNVVFSNLKMDANSKSDNPPKNTDGFDIGE), 214–257 (STYV…SVGS), 266–289 (VKNIYVTGATMINSTKAAGIKTYP), 299–320 (VSNVTFNDFTVDNSDYAFQIQS), and 333–375 (PGNA…SISG). The Proton donor role is filled by D228. H251 is a catalytic residue. N-linked (GlcNAc...) asparagine glycans are attached at residues N278 and N301.

This sequence belongs to the glycosyl hydrolase 28 family.

The protein localises to the secreted. In terms of biological role, pectinolytic enzyme involved in the degradation of xylogalacturonan (xga), a galacturonan backbone heavily substituted with xylose, and which is one important component of the hairy regions of pectin. Activity requires a galacturonic acid backbone substituted with xylose. The protein is Endo-xylogalacturonan hydrolase A (xghA) of Aspergillus tubingensis.